The following is a 245-amino-acid chain: Probable phosphatase Teth514_1060 (245 aa).

Residues H8, H10, H16, H41, E74, H102, H133, D194, and H196 each contribute to the Zn(2+) site.

This sequence belongs to the PHP family. The cofactor is Zn(2+).

The sequence is that of Probable phosphatase Teth514_1060 from Thermoanaerobacter sp. (strain X514).